We begin with the raw amino-acid sequence, 657 residues long: tRNA 5-methylaminomethyl-2-thiouridine biosynthesis bifunctional protein MnmC (657 aa).

Residues 1–236 are tRNA (mnm(5)s(2)U34)-methyltransferase; the sequence is MPDRLVPATL…KRAMLVGEYA (236 aa). An FAD-dependent cmnm(5)s(2)U34 oxidoreductase region spans residues 261–657; the sequence is IGAGVAGCAV…LRARQVSAAD (397 aa).

This sequence in the N-terminal section; belongs to the methyltransferase superfamily. tRNA (mnm(5)s(2)U34)-methyltransferase family. It in the C-terminal section; belongs to the DAO family. The cofactor is FAD.

Its subcellular location is the cytoplasm. The catalysed reaction is 5-aminomethyl-2-thiouridine(34) in tRNA + S-adenosyl-L-methionine = 5-methylaminomethyl-2-thiouridine(34) in tRNA + S-adenosyl-L-homocysteine + H(+). In terms of biological role, catalyzes the last two steps in the biosynthesis of 5-methylaminomethyl-2-thiouridine (mnm(5)s(2)U) at the wobble position (U34) in tRNA. Catalyzes the FAD-dependent demodification of cmnm(5)s(2)U34 to nm(5)s(2)U34, followed by the transfer of a methyl group from S-adenosyl-L-methionine to nm(5)s(2)U34, to form mnm(5)s(2)U34. This Burkholderia multivorans (strain ATCC 17616 / 249) protein is tRNA 5-methylaminomethyl-2-thiouridine biosynthesis bifunctional protein MnmC.